A 146-amino-acid polypeptide reads, in one-letter code: Angiogenin (146 aa).

A signal peptide spans 1–24 (MVMGLGLFLLVFMLGLGLTSPTLA). Q25 carries the pyrrolidone carboxylic acid modification. H37 serves as the catalytic Proton acceptor. R45 serves as a coordination point for tRNA. Disulfide bonds link C50–C105, C63–C116, and C81–C131. The Nucleolar localization signal signature appears at 55-59 (RRQGM). TRNA-binding residues include C105 and I127. H138 (proton donor) is an active-site residue.

This sequence belongs to the pancreatic ribonuclease family. In terms of assembly, homodimer. Interacts with RNH1; inhibiting ANG ribonuclease activity. Interacts with PCNA.

The protein resides in the secreted. Its subcellular location is the nucleus. It is found in the nucleolus. The protein localises to the cytoplasm. It localises to the stress granule. Has weak tRNA ribonuclease activity by itself due to partial autoinhibition by its C-terminus, which folds into a short alpha-helix that partially occludes the substrate-binding site. In absence of stress, the ribonuclease activity is inhibited by RNH1 in the cytoplasm. In response to stress, dissociates from RNH1 in the cytoplasm and associates with cytoplasmic ribosomes with vacant A-sites: ribosomes directly activate the tRNA ribonuclease activity of ANG by refolding the C-terminal alpha-helix. In response to stress, the angiogenic activity of ANG is inhibited by RNH1 in the nucleus. Functionally, secreted ribonuclease that can either promote or restrict cell proliferation of target cells, depending on the context. Endocytosed in target cells via its receptor PLXNB2 and translocates to the cytoplasm or nucleus. Under stress conditions, localizes to the cytoplasm and promotes the assembly of stress granules (SGs): specifically cleaves a subset of tRNAs within anticodon loops to produce tRNA-derived stress-induced fragments (tiRNAs), resulting in translation repression and inhibition of cell proliferation. tiRNas also prevent formation of apoptosome, thereby promoting cell survival. Preferentially cleaves RNAs between a pyrimidine and an adenosine residue, suggesting that it cleaves the anticodon loop of tRNA(Ala) (32-UUAGCAU-38) after positions 33 and 36. Cleaves a subset of tRNAs, including tRNA(Ala), tRNA(Glu), tRNA(Gly), tRNA(Lys), tRNA(Val), tRNA(His), tRNA(Asp) and tRNA(Sec). Under growth conditions and in differentiated cells, translocates to the nucleus and stimulates ribosomal RNA (rRNA) transcription, including that containing the initiation site sequences of 45S rRNA, thereby promoting cell growth and proliferation. Angiogenin induces vascularization of normal and malignant tissues via its ability to promote rRNA transcription. Involved in hematopoietic stem and progenitor cell (HSPC) growth and survival by promoting rRNA transcription in growth conditions and inhibiting translation in response to stress, respectively. Mediates the crosstalk between myeloid and intestinal epithelial cells to protect the intestinal epithelial barrier integrity: secreted by myeloid cells and promotes intestinal epithelial cells proliferation and survival. Also mediates osteoclast-endothelial cell crosstalk in growing bone: produced by osteoclasts and protects the neighboring vascular cells against senescence by promoting rRNA transcription. This Miopithecus talapoin (Angolan talapoin) protein is Angiogenin (ANG).